Consider the following 982-residue polypeptide: Glutamate [NMDA] receptor subunit 1 (982 aa).

Positions 1 to 16 are cleaved as a signal peptide; it reads MAFAVWFLSTFVIVAA. The Extracellular portion of the chain corresponds to 17–561; the sequence is QRHMALEHEG…TLVSFLQPFS (545 aa). Residues N247, N303, N334, N386, N443, N470, and N490 are each glycosylated (N-linked (GlcNAc...) asparagine). Glycine contacts are provided by residues 518-520 and R525; that span reads PLT. Residues 562 to 582 traverse the membrane as a helical segment; that stretch reads NTLWILVMVSVHVVALVLYLL. Residues 583 to 639 are Cytoplasmic-facing; the sequence is DRFSPFGRFKLSHSDSNEEKALNLSSAVWFAWGVLLNSGIGEGTPRSFSARVLGMVW. Residues 640-660 traverse the membrane as a helical segment; that stretch reads AGFAMIIVASYTANLAAFLVL. At 661-819 the chain is on the extracellular side; the sequence is ERPKTKLSGI…KTPNTLGLKN (159 aa). The N-linked (GlcNAc...) asparagine glycan is linked to N681. Glycine is bound by residues S691 and D735. A helical membrane pass occupies residues 820 to 840; it reads MAGVFILVGVGIAGGVGLIII. Topologically, residues 841–982 are cytoplasmic; sequence EVIYKKHQVK…YTSDVSHLVV (142 aa). Residues 934 to 982 are disordered; sequence EIGKPGQSPKVIGGPPHPMLGKTRPQAQQNLLPPRYSPGYTSDVSHLVV. Polar residues predominate over residues 972-982; the sequence is GYTSDVSHLVV.

Belongs to the glutamate-gated ion channel (TC 1.A.10.1) family. As to quaternary structure, forms a heteromeric NMDA channel with Nmdar2.

It localises to the cell membrane. Its subcellular location is the postsynaptic cell membrane. The protein resides in the postsynaptic density. Its function is as follows. NMDA receptor subtype of glutamate-gated ion channels with high calcium permeability and voltage-dependent sensitivity to magnesium. Mediated by glycine. This protein plays a key role in synaptic plasticity, synaptogenesis, excitotoxicity, memory acquisition and learning. It mediates neuronal functions in glutamate neurotransmission. Is involved in the cell surface targeting of NMDA receptors. Plays a role in associative learning and in long-term memory consolidation. This chain is Glutamate [NMDA] receptor subunit 1, found in Drosophila willistoni (Fruit fly).